We begin with the raw amino-acid sequence, 447 residues long: NADP-specific glutamate dehydrogenase (447 aa).

Substrate is bound by residues K92, Q113, and K116. K128 serves as the catalytic Proton donor. Residue G167 coordinates substrate. NADP(+) contacts are provided by T211 and N242. S380 is a binding site for substrate.

Belongs to the Glu/Leu/Phe/Val dehydrogenases family. As to quaternary structure, homohexamer.

The catalysed reaction is L-glutamate + NADP(+) + H2O = 2-oxoglutarate + NH4(+) + NADPH + H(+). With respect to regulation, competitively inhibited by homoserine and by glutamine. Its function is as follows. Catalyzes the reversible oxidative deamination of glutamate to alpha-ketoglutarate and ammonia. This chain is NADP-specific glutamate dehydrogenase, found in Escherichia coli (strain K12).